A 78-amino-acid chain; its full sequence is DNA-directed RNA polymerase subunit omega (78 aa).

This sequence belongs to the RNA polymerase subunit omega family. As to quaternary structure, the RNAP catalytic core consists of 2 alpha, 1 beta, 1 beta' and 1 omega subunit. When a sigma factor is associated with the core the holoenzyme is formed, which can initiate transcription.

The catalysed reaction is RNA(n) + a ribonucleoside 5'-triphosphate = RNA(n+1) + diphosphate. Functionally, promotes RNA polymerase assembly. Latches the N- and C-terminal regions of the beta' subunit thereby facilitating its interaction with the beta and alpha subunits. The sequence is that of DNA-directed RNA polymerase subunit omega from Desulfovibrio desulfuricans (strain ATCC 27774 / DSM 6949 / MB).